Consider the following 447-residue polypeptide: Enolase (447 aa).

Gln-168 provides a ligand contact to (2R)-2-phosphoglycerate. The active-site Proton donor is Glu-210. Mg(2+) is bound by residues Asp-247, Glu-292, and Asp-319. (2R)-2-phosphoglycerate-binding residues include Lys-344, Arg-373, Ser-374, and Lys-395. Residue Lys-344 is the Proton acceptor of the active site.

Belongs to the enolase family. Component of the RNA degradosome, a multiprotein complex involved in RNA processing and mRNA degradation. Mg(2+) serves as cofactor.

The protein resides in the cytoplasm. The protein localises to the secreted. Its subcellular location is the cell surface. It catalyses the reaction (2R)-2-phosphoglycerate = phosphoenolpyruvate + H2O. Its pathway is carbohydrate degradation; glycolysis; pyruvate from D-glyceraldehyde 3-phosphate: step 4/5. Its function is as follows. Catalyzes the reversible conversion of 2-phosphoglycerate (2-PG) into phosphoenolpyruvate (PEP). It is essential for the degradation of carbohydrates via glycolysis. In Blochmanniella floridana, this protein is Enolase.